A 116-amino-acid chain; its full sequence is UPF0654 protein C869.09 (116 aa).

Residues L32–K116 form a disordered region. The span at S39–G48 shows a compositional bias: polar residues. Residues Q49–F64 are compositionally biased toward basic and acidic residues.

This sequence belongs to the UPF0654 (con-6) family.

The protein resides in the cytoplasm. The protein localises to the nucleus. The chain is UPF0654 protein C869.09 from Schizosaccharomyces pombe (strain 972 / ATCC 24843) (Fission yeast).